Reading from the N-terminus, the 196-residue chain is Glycerol-3-phosphate acyltransferase (196 aa).

5 helical membrane passes run 1–21 (MGFI…SILF), 53–73 (KYGA…AILD), 76–96 (YIDP…IGHI), 115–135 (VVFG…AFVF), and 141–161 (VSLA…EGDF).

This sequence belongs to the PlsY family. In terms of assembly, probably interacts with PlsX.

It localises to the cell inner membrane. It carries out the reaction an acyl phosphate + sn-glycerol 3-phosphate = a 1-acyl-sn-glycero-3-phosphate + phosphate. Its pathway is lipid metabolism; phospholipid metabolism. Functionally, catalyzes the transfer of an acyl group from acyl-phosphate (acyl-PO(4)) to glycerol-3-phosphate (G3P) to form lysophosphatidic acid (LPA). This enzyme utilizes acyl-phosphate as fatty acyl donor, but not acyl-CoA or acyl-ACP. The polypeptide is Glycerol-3-phosphate acyltransferase (Hydrogenobaculum sp. (strain Y04AAS1)).